Consider the following 413-residue polypeptide: Histidine--tRNA ligase (413 aa).

The protein belongs to the class-II aminoacyl-tRNA synthetase family. As to quaternary structure, homodimer.

It localises to the cytoplasm. The enzyme catalyses tRNA(His) + L-histidine + ATP = L-histidyl-tRNA(His) + AMP + diphosphate + H(+). In Geobacter sulfurreducens (strain ATCC 51573 / DSM 12127 / PCA), this protein is Histidine--tRNA ligase.